A 151-amino-acid polypeptide reads, in one-letter code: Ribosome maturation factor RimP (151 aa).

This sequence belongs to the RimP family.

It is found in the cytoplasm. Its function is as follows. Required for maturation of 30S ribosomal subunits. The sequence is that of Ribosome maturation factor RimP from Vibrio vulnificus (strain CMCP6).